Consider the following 356-residue polypeptide: Cyclin-D4-1 (356 aa).

This sequence belongs to the cyclin family. Cyclin D subfamily.

The sequence is that of Cyclin-D4-1 (CYCD4-1) from Oryza sativa subsp. japonica (Rice).